Here is a 199-residue protein sequence, read N- to C-terminus: Thymidine kinase (199 aa).

Residues 23–30 (GSMFSGKT) and 95–98 (DEAQ) contribute to the ATP site. The active-site Proton acceptor is the Glu96. The Zn(2+) site is built by Cys152, Cys155, Cys184, and Cys187.

It belongs to the thymidine kinase family. As to quaternary structure, homotetramer.

It localises to the cytoplasm. It catalyses the reaction thymidine + ATP = dTMP + ADP + H(+). This Bacteroides fragilis (strain YCH46) protein is Thymidine kinase.